Here is a 461-residue protein sequence, read N- to C-terminus: Steroidogenic factor 1 (461 aa).

Positions 10–85 (DELCPVCGDK…VGMRLEAVRA (76 aa)) form a DNA-binding region, nuclear receptor. Residues 13 to 33 (CPVCGDKVSGYHYGLLTCESC) form an NR C4-type zinc finger. K34, K38, and K72 each carry N6-acetyllysine. The segment at 49 to 73 (CTESQSCKIDKTQRKRCPFCRFQKC) adopts an NR C4-type zinc-finger fold. K119 is covalently cross-linked (Glycyl lysine isopeptide (Lys-Gly) (interchain with G-Cter in SUMO)). The tract at residues 119–157 (KLETGPPMGVPPPPPPAPDYVLPPSLHGPEPKGLAAGPP) is disordered. Pro residues predominate over residues 126–136 (MGVPPPPPPAP). Residue K194 forms a Glycyl lysine isopeptide (Lys-Gly) (interchain with G-Cter in SUMO) linkage. S203 bears the Phosphoserine; by CDK7 mark. In terms of domain architecture, NR LBD spans 222 to 459 (NVPELILQLL…NLLIEMLQAK (238 aa)). The tract at residues 230–461 (LLQLEPDEDQ…LIEMLQAKQT (232 aa)) is important for dimerization. A 1,2-diacyl-sn-glycero-3-phosphocholine contacts are provided by G341, Y436, and K440. G341, Y436, and K440 together coordinate a 1,2-diacylglycero-3-phosphoethanolamine.

It belongs to the nuclear hormone receptor family. NR5 subfamily. As to quaternary structure, binds DNA as a monomer. Interacts with NR0B2 and PPARGC1A. Part of a complex consisting of SFPQ, NONO and NR5A1. Interacts with NCOA2. Interacts with DGKQ and CDK7. Binds to and activated by HIPK3. Acetylation stimulates the transcriptional activity. In terms of processing, sumoylation reduces CDK7-mediated phosphorylation on Ser-203. Post-translationally, phosphorylated on Ser-203 by CDK7. This phosphorylation promotes transcriptional activity. As to expression, high expressed in the adrenal cortex, the ovary, the testis, and the spleen.

It is found in the nucleus. Its function is as follows. Transcriptional activator. Essential for sexual differentiation and formation of the primary steroidogenic tissues. Binds to the Ad4 site found in the promoter region of steroidogenic P450 genes such as CYP11A, CYP11B and CYP21B. Also regulates the AMH/Muellerian inhibiting substance gene as well as the AHCH and STAR genes. 5'-YCAAGGYC-3' and 5'-RRAGGTCA-3' are the consensus sequences for the recognition by NR5A1. The SFPQ-NONO-NR5A1 complex binds to the CYP17 promoter and regulates basal and cAMP-dependent transcriptional activity. Binds phosphatidylcholine. Binds phospholipids with a phosphatidylinositol (PI) headgroup, in particular PI(3,4)P2 and PI(3,4,5)P3. Activated by the phosphorylation of NR5A1 by HIPK3 leading to increased steroidogenic gene expression upon cAMP signaling pathway stimulation. The sequence is that of Steroidogenic factor 1 (NR5A1) from Homo sapiens (Human).